The primary structure comprises 512 residues: Bifunctional pantoate ligase/cytidylate kinase (512 aa).

Positions 1-276 are pantoate--beta-alanine ligase; it reads MKLQTSADLQ…CGEARLIDHR (276 aa). 27–34 is a binding site for ATP; the sequence is MGALHQGH. The active-site Proton donor is the His-34. Gln-58 is a (R)-pantoate binding site. A beta-alanine-binding site is contributed by Gln-58. 147 to 150 serves as a coordination point for ATP; that stretch reads GEKD. (R)-pantoate is bound at residue Gln-153. ATP-binding positions include Leu-176 and 184 to 187; that span reads LSSR. Residues 277–512 form a cytidylate kinase region; it reads VLMSRLPILA…VPVEALNADA (236 aa).

This sequence in the N-terminal section; belongs to the pantothenate synthetase family. It in the C-terminal section; belongs to the cytidylate kinase family. Type 1 subfamily.

It localises to the cytoplasm. It catalyses the reaction (R)-pantoate + beta-alanine + ATP = (R)-pantothenate + AMP + diphosphate + H(+). The enzyme catalyses CMP + ATP = CDP + ADP. The catalysed reaction is dCMP + ATP = dCDP + ADP. It functions in the pathway cofactor biosynthesis; (R)-pantothenate biosynthesis; (R)-pantothenate from (R)-pantoate and beta-alanine: step 1/1. Its function is as follows. Catalyzes the condensation of pantoate with beta-alanine in an ATP-dependent reaction via a pantoyl-adenylate intermediate. In terms of biological role, catalyzes the transfer of a phosphate group from ATP to either CMP or dCMP to form CDP or dCDP and ADP, respectively. This chain is Bifunctional pantoate ligase/cytidylate kinase, found in Synechococcus sp. (strain RCC307).